The sequence spans 1035 residues: Potassium-transporting ATPase alpha chain 1 (1035 aa).

The tract at residues 1–41 is disordered; it reads MGKAENYELYSVELGPGPGGDMAAKMSKKKKAGGGGGKRKE. Topologically, residues 1–98 are cytoplasmic; the sequence is MGKAENYELY…NALRPPRGTP (98 aa). Phosphotyrosine is present on residues tyrosine 7 and tyrosine 10. A compositionally biased stretch (basic residues) spans 26–40; that stretch reads MSKKKKAGGGGGKRK. Position 27 is a phosphoserine (serine 27). A helical membrane pass occupies residues 99–119; it reads EYVKFARQLAGGLQCLMWVAA. Over 120 to 142 the chain is Lumenal; that stretch reads AICLIAFAIQASEGDLTTDDNLY. The chain crosses the membrane as a helical span at residues 143–163; that stretch reads LAIALIAVVVVTGCFGYYQEF. Topologically, residues 164–299 are cytoplasmic; that stretch reads KSTNIIASFK…NEKTPIAIEI (136 aa). A helical transmembrane segment spans residues 300-319; that stretch reads EHFVDIIAGLAILFGATFFI. The Lumenal portion of the chain corresponds to 320-331; that stretch reads VAMCIGYTFLRA. Residues 332 to 349 traverse the membrane as a helical segment; sequence MVFFMAIVVAYVPEGLLA. 4 residues coordinate K(+): valine 340, alanine 341, valine 343, and glutamate 345. Over 350-783 the chain is Cytoplasmic; it reads TVTVCLSLTA…EQGRLIFDNL (434 aa). Aspartate 387 (4-aspartylphosphate intermediate) is an active-site residue. The Mg(2+) site is built by aspartate 387 and threonine 389. Residues serine 463 and serine 601 each carry the phosphoserine modification. Aspartate 728 and aspartate 732 together coordinate Mg(2+). A helical membrane pass occupies residues 784–803; that stretch reads KKSIAYTLTKNIPELTPYLI. Glutamate 797 provides a ligand contact to K(+). The Lumenal portion of the chain corresponds to 804–813; that stretch reads YITVSVPLPL. Residues 814-834 form a helical membrane-spanning segment; that stretch reads GCITILFIELCTDIFPSVSLA. Position 822 (glutamate 822) interacts with K(+). At 835-854 the chain is on the cytoplasmic side; it reads YEKAESDIMHLRPRNPKRDR. Residue serine 840 is modified to Phosphoserine. Residues 855 to 877 form a helical membrane-spanning segment; it reads LVNEPLAAYSYFQIGAIQSFAGF. The Lumenal segment spans residues 878–929; that stretch reads TDYFTAMAQEGWFPLLCVGLRAQWEDHHLQDLQDSYGQEWTFGQRLYQQYTC. The chain crosses the membrane as a helical span at residues 930–949; the sequence is YTVFFISIEVCQIADVLIRK. The Cytoplasmic portion of the chain corresponds to 950-963; the sequence is TRRLSAFQQGFFRN. The residue at position 954 (serine 954) is a Phosphoserine; by PKA. The helical transmembrane segment at 964 to 982 threads the bilayer; sequence KILVIAIVFQVCIGCFLCY. Residues 983 to 997 lie on the Lumenal side of the membrane; that stretch reads CPGMPNIFNFMPIRF. Residues 998 to 1018 form a helical membrane-spanning segment; that stretch reads QWWLVPLPYGILIFVYDEIRK. The Cytoplasmic segment spans residues 1019-1035; the sequence is LGVRCCPGSWWDQELYY.

The protein belongs to the cation transport ATPase (P-type) (TC 3.A.3) family. Type IIC subfamily. The gastric H(+)/K(+) ATPase pump is composed of the catalytic alpha subunit ATP4A and the regulatory beta subunit ATP4B. Interacts (via the P-domain) with ATP4B (via N-terminus); this interaction stabilizes the lumenal-open E2 conformation state and prevents the reverse reaction of the transport cycle. Expressed in gastric parietal cells (at protein level).

The protein localises to the apical cell membrane. It carries out the reaction K(+)(out) + ATP + H2O + H(+)(in) = K(+)(in) + ADP + phosphate + 2 H(+)(out). Functionally, the catalytic subunit of the gastric H(+)/K(+) ATPase pump which transports H(+) ions in exchange for K(+) ions across the apical membrane of parietal cells. Uses ATP as an energy source to pump H(+) ions to the gastric lumen while transporting K(+) ion from the lumen into the cell. Remarkably generates a million-fold proton gradient across the gastric parietal cell membrane, acidifying the gastric juice down to pH 1. Within a transport cycle, the transfer of a H(+) ion across the membrane is coupled to ATP hydrolysis and is associated with a transient phosphorylation that shifts the pump conformation from inward-facing (E1) to outward-facing state (E2). The release of the H(+) ion in the stomach lumen is followed by binding of K(+) ion converting the pump conformation back to the E1 state. This chain is Potassium-transporting ATPase alpha chain 1, found in Homo sapiens (Human).